The following is a 474-amino-acid chain: Aspartic-type endopeptidase ctsD (474 aa).

The first 19 residues, 1–19 (MHLLQCLLSTISLASTVTA), serve as a signal peptide directing secretion. The Peptidase A1 domain occupies 106-413 (YFATVRVGSQ…DYDNHRIGFA (308 aa)). The active site involves aspartate 124. Asparagine 189, asparagine 197, asparagine 275, and asparagine 301 each carry an N-linked (GlcNAc...) asparagine glycan. Residue aspartate 307 is part of the active site. N-linked (GlcNAc...) asparagine glycans are attached at residues asparagine 338, asparagine 344, and asparagine 414. Serine 452 carries GPI-anchor amidated serine lipidation. Residues 453-474 (ASIVSRFVHWPFIFALLCMVLV) constitute a propeptide, removed in mature form.

This sequence belongs to the peptidase A1 family.

The protein resides in the cell membrane. Secreted aspartic-type endopeptidase which is secreted and contributes to virulence. This is Aspartic-type endopeptidase ctsD (ctsD) from Aspergillus fumigatus (strain ATCC MYA-4609 / CBS 101355 / FGSC A1100 / Af293) (Neosartorya fumigata).